Consider the following 165-residue polypeptide: Putative pre-16S rRNA nuclease (165 aa).

It belongs to the YqgF nuclease family.

The protein resides in the cytoplasm. Functionally, could be a nuclease involved in processing of the 5'-end of pre-16S rRNA. This Rhizobium meliloti (strain 1021) (Ensifer meliloti) protein is Putative pre-16S rRNA nuclease.